Reading from the N-terminus, the 408-residue chain is Peptidase T (408 aa).

Residue histidine 78 coordinates Zn(2+). The active site involves aspartate 80. Residue aspartate 140 coordinates Zn(2+). Glutamate 174 acts as the Proton acceptor in catalysis. Zn(2+) contacts are provided by glutamate 175, aspartate 197, and histidine 379.

Belongs to the peptidase M20B family. The cofactor is Zn(2+).

The protein resides in the cytoplasm. It carries out the reaction Release of the N-terminal residue from a tripeptide.. In terms of biological role, cleaves the N-terminal amino acid of tripeptides. The chain is Peptidase T from Staphylococcus aureus (strain bovine RF122 / ET3-1).